Consider the following 503-residue polypeptide: Cytochrome P450 3A13 (503 aa).

Cys-442 provides a ligand contact to heme.

Belongs to the cytochrome P450 family. Requires heme as cofactor.

It is found in the endoplasmic reticulum membrane. Its subcellular location is the microsome membrane. It catalyses the reaction an organic molecule + reduced [NADPH--hemoprotein reductase] + O2 = an alcohol + oxidized [NADPH--hemoprotein reductase] + H2O + H(+). In terms of biological role, can activate aflatoxin B1 to a genotoxic product. In Mus musculus (Mouse), this protein is Cytochrome P450 3A13 (Cyp3a13).